A 118-amino-acid polypeptide reads, in one-letter code: Large ribosomal subunit protein bL20 (118 aa).

The protein belongs to the bacterial ribosomal protein bL20 family.

Binds directly to 23S ribosomal RNA and is necessary for the in vitro assembly process of the 50S ribosomal subunit. It is not involved in the protein synthesizing functions of that subunit. The chain is Large ribosomal subunit protein bL20 from Erwinia tasmaniensis (strain DSM 17950 / CFBP 7177 / CIP 109463 / NCPPB 4357 / Et1/99).